Consider the following 118-residue polypeptide: Co-chaperonin GroES (118 aa).

This sequence belongs to the GroES chaperonin family. Heptamer of 7 subunits arranged in a ring. Interacts with the chaperonin GroEL.

It localises to the cytoplasm. Together with the chaperonin GroEL, plays an essential role in assisting protein folding. The GroEL-GroES system forms a nano-cage that allows encapsulation of the non-native substrate proteins and provides a physical environment optimized to promote and accelerate protein folding. GroES binds to the apical surface of the GroEL ring, thereby capping the opening of the GroEL channel. This chain is Co-chaperonin GroES, found in Helicobacter acinonychis (strain Sheeba).